We begin with the raw amino-acid sequence, 206 residues long: Large ribosomal subunit protein uL4 (206 aa).

Residues 44-87 (NRQGTQSAKTRSEVSGGGRKPWRQKGTGHARQGSTRSPQWTGGG) form a disordered region.

This sequence belongs to the universal ribosomal protein uL4 family. Part of the 50S ribosomal subunit.

Functionally, one of the primary rRNA binding proteins, this protein initially binds near the 5'-end of the 23S rRNA. It is important during the early stages of 50S assembly. It makes multiple contacts with different domains of the 23S rRNA in the assembled 50S subunit and ribosome. Its function is as follows. Forms part of the polypeptide exit tunnel. The polypeptide is Large ribosomal subunit protein uL4 (Lachnospira eligens (strain ATCC 27750 / DSM 3376 / VPI C15-48 / C15-B4) (Eubacterium eligens)).